Consider the following 423-residue polypeptide: Enolase (423 aa).

Glutamine 165 is a (2R)-2-phosphoglycerate binding site. Glutamate 209 acts as the Proton donor in catalysis. 3 residues coordinate Mg(2+): aspartate 244, glutamate 285, and aspartate 310. (2R)-2-phosphoglycerate-binding residues include lysine 335, arginine 364, serine 365, and lysine 386. The active-site Proton acceptor is the lysine 335.

Belongs to the enolase family. In terms of assembly, homooctamer formed by a tetramer of dimers. Mg(2+) is required as a cofactor.

The protein localises to the cytoplasm. It is found in the secreted. The protein resides in the cell surface. It carries out the reaction (2R)-2-phosphoglycerate = phosphoenolpyruvate + H2O. Its pathway is carbohydrate degradation; glycolysis; pyruvate from D-glyceraldehyde 3-phosphate: step 4/5. With respect to regulation, the covalent binding to the substrate causes inactivation of the enzyme, and possibly serves as a signal for the export of the protein. Functionally, catalyzes the reversible conversion of 2-phosphoglycerate (2-PG) into phosphoenolpyruvate (PEP). It is essential for the degradation of carbohydrates via glycolysis. This is Enolase from Methanocaldococcus jannaschii (strain ATCC 43067 / DSM 2661 / JAL-1 / JCM 10045 / NBRC 100440) (Methanococcus jannaschii).